The following is a 162-amino-acid chain: MERIKQFFKSFLLVEMLKGMKVTGRYLFAPKITVHYPEEKTPQSPRFRGLHALRRYPNGEERCIACKLCEAVCPAMAITIESEQRDDSTRRTTRYDIDMIKCIFCGFCEEACPVDAIVETRVLEYHGEVRGDLTYTKEMLLAVGDRYEEQIARDRAADAPYR.

4Fe-4S ferredoxin-type domains are found at residues 53 to 83 and 93 to 122; these read LRRYPNGEERCIACKLCEAVCPAMAITIESE and TRYDIDMIKCIFCGFCEEACPVDAIVETRV. [4Fe-4S] cluster is bound by residues Cys63, Cys66, Cys69, Cys73, Cys102, Cys105, Cys108, and Cys112.

Belongs to the complex I 23 kDa subunit family. NDH-1 is composed of 14 different subunits. Subunits NuoA, H, J, K, L, M, N constitute the membrane sector of the complex. It depends on [4Fe-4S] cluster as a cofactor.

The protein localises to the cell inner membrane. The catalysed reaction is a quinone + NADH + 5 H(+)(in) = a quinol + NAD(+) + 4 H(+)(out). Functionally, NDH-1 shuttles electrons from NADH, via FMN and iron-sulfur (Fe-S) centers, to quinones in the respiratory chain. The immediate electron acceptor for the enzyme in this species is believed to be ubiquinone. Couples the redox reaction to proton translocation (for every two electrons transferred, four hydrogen ions are translocated across the cytoplasmic membrane), and thus conserves the redox energy in a proton gradient. This chain is NADH-quinone oxidoreductase subunit I, found in Nitrosomonas europaea (strain ATCC 19718 / CIP 103999 / KCTC 2705 / NBRC 14298).